The sequence spans 426 residues: Aspartate aminotransferase, mitochondrial (426 aa).

A mitochondrion-targeting transit peptide spans 1–29 (MIRSARLISNIKFGQKNIRQFSTNTNWWA). 3 residues coordinate substrate: glycine 60, tryptophan 156, and asparagine 209. Lysine 273 bears the N6-(pyridoxal phosphate)lysine mark. Residue arginine 401 participates in substrate binding.

It belongs to the class-I pyridoxal-phosphate-dependent aminotransferase family. Homodimer. The cofactor is pyridoxal 5'-phosphate.

The protein localises to the mitochondrion matrix. The protein resides in the cell membrane. The catalysed reaction is L-aspartate + 2-oxoglutarate = oxaloacetate + L-glutamate. The enzyme catalyses L-kynurenine + 2-oxoglutarate = kynurenate + L-glutamate + H2O. Plays a key role in amino acid metabolism. Important for metabolite exchange between mitochondria and cytosol. The protein is Aspartate aminotransferase, mitochondrial (aatA) of Dictyostelium discoideum (Social amoeba).